The primary structure comprises 104 residues: L-rhamnose mutarotase (104 aa).

Tyr-18 lines the substrate pocket. His-22 serves as the catalytic Proton donor. Residues Tyr-41 and 76 to 77 (WW) contribute to the substrate site.

Belongs to the rhamnose mutarotase family. As to quaternary structure, homodimer.

The protein resides in the cytoplasm. The enzyme catalyses alpha-L-rhamnose = beta-L-rhamnose. It participates in carbohydrate metabolism; L-rhamnose metabolism. Its function is as follows. Involved in the anomeric conversion of L-rhamnose. This is L-rhamnose mutarotase from Yersinia pseudotuberculosis serotype O:1b (strain IP 31758).